Here is a 358-residue protein sequence, read N- to C-terminus: Alanine racemase, biosynthetic (358 aa).

The active-site Proton acceptor; specific for D-alanine is the Lys34. Lys34 bears the N6-(pyridoxal phosphate)lysine mark. Residue Arg130 participates in substrate binding. Tyr254 (proton acceptor; specific for L-alanine) is an active-site residue. Residue Met302 coordinates substrate.

It belongs to the alanine racemase family. The cofactor is pyridoxal 5'-phosphate.

The enzyme catalyses L-alanine = D-alanine. Its pathway is amino-acid biosynthesis; D-alanine biosynthesis; D-alanine from L-alanine: step 1/1. The protein operates within cell wall biogenesis; peptidoglycan biosynthesis. In terms of biological role, catalyzes the interconversion of L-alanine and D-alanine. Provides the D-alanine required for cell wall biosynthesis. The protein is Alanine racemase, biosynthetic (alr) of Pseudomonas aeruginosa (strain ATCC 15692 / DSM 22644 / CIP 104116 / JCM 14847 / LMG 12228 / 1C / PRS 101 / PAO1).